Here is a 242-residue protein sequence, read N- to C-terminus: MASDINALKYKKVLLKVSGEALMGNKQFGHEYEVIKKIAEDIKEVIDLGLEVAIVVGGGNIYRGINAALVGMDRASADYIGMLATVMNALTLQNVMESLGIYTRVLSAIPMMSVCEPYIRRKAKRHMEKKRVVIFAGGTGNPFCTTDSAAVLRAIEMNCDILLKATQVDGVYDSDPKKNPNAKKYFTISYKDVINNHLQVMDTAAIAVARENKLPIRVFSIKEHGNFARVIQDKGQYTTIGE.

16–19 serves as a coordination point for ATP; it reads KVSG. Gly-58 provides a ligand contact to UMP. Positions 59 and 63 each coordinate ATP. Residues Asp-78 and 139 to 146 each bind UMP; that span reads TGNPFCTT. Thr-166, Gln-167, Tyr-172, and Asp-175 together coordinate ATP.

It belongs to the UMP kinase family. As to quaternary structure, homohexamer.

The protein localises to the cytoplasm. It catalyses the reaction UMP + ATP = UDP + ADP. It functions in the pathway pyrimidine metabolism; CTP biosynthesis via de novo pathway; UDP from UMP (UMPK route): step 1/1. Inhibited by UTP. In terms of biological role, catalyzes the reversible phosphorylation of UMP to UDP. The chain is Uridylate kinase from Rickettsia prowazekii (strain Madrid E).